Reading from the N-terminus, the 70-residue chain is Small ribosomal subunit protein bS21B (70 aa).

Belongs to the bacterial ribosomal protein bS21 family.

This is Small ribosomal subunit protein bS21B from Rhizobium etli (strain ATCC 51251 / DSM 11541 / JCM 21823 / NBRC 15573 / CFN 42).